The chain runs to 296 residues: Nucleotide-binding protein spr1424 (296 aa).

13-20 is a binding site for ATP; the sequence is GMGGAGKT. Residue 63–66 coordinates GTP; the sequence is DMRS.

Belongs to the RapZ-like family.

Its function is as follows. Displays ATPase and GTPase activities. The polypeptide is Nucleotide-binding protein spr1424 (Streptococcus pneumoniae (strain ATCC BAA-255 / R6)).